The chain runs to 319 residues: Cytochrome c biogenesis protein CcsA (319 aa).

7 helical membrane-spanning segments follow: residues 9-29 (ILTHISFSLVSIGITIFLITL), 44-64 (GVIGTFLCITGLLVTRWAYSG), 71-91 (LYESLLFLSWSFAIIHMFPYL), 143-163 (MVLGYAALLCGSLLSVALLVI), 225-245 (IISLGFIFLTIGILSGAVWAN), 259-273 (TWAFITWTMFAIYLH), and 286-306 (AIVAFLGFIIIWICYFGVNLL).

Belongs to the CcmF/CycK/Ccl1/NrfE/CcsA family. As to quaternary structure, may interact with Ccs1.

The protein resides in the plastid. It is found in the chloroplast thylakoid membrane. Its function is as follows. Required during biogenesis of c-type cytochromes (cytochrome c6 and cytochrome f) at the step of heme attachment. The protein is Cytochrome c biogenesis protein CcsA of Oenothera argillicola (Appalachian evening primrose).